A 247-amino-acid chain; its full sequence is Carboxy-S-adenosyl-L-methionine synthase (247 aa).

Residues Tyr40, 65-67 (GSS), 90-91 (DN), 122-123 (DI), Asn137, and Arg204 each bind S-adenosyl-L-methionine.

This sequence belongs to the class I-like SAM-binding methyltransferase superfamily. Cx-SAM synthase family. As to quaternary structure, homodimer.

It catalyses the reaction prephenate + S-adenosyl-L-methionine = carboxy-S-adenosyl-L-methionine + 3-phenylpyruvate + H2O. Functionally, catalyzes the conversion of S-adenosyl-L-methionine (SAM) to carboxy-S-adenosyl-L-methionine (Cx-SAM). The sequence is that of Carboxy-S-adenosyl-L-methionine synthase from Pseudomonas savastanoi pv. phaseolicola (strain 1448A / Race 6) (Pseudomonas syringae pv. phaseolicola (strain 1448A / Race 6)).